A 97-amino-acid chain; its full sequence is MKKDFHFPSQSVSFKCASCSNSFTIESTLKQKEITIDICGKCHPFYIGELTKQTVHGRAEKLSGKFNAGKAFLENKTPKKAKGKTEEYTKHRSLNEL.

A disordered region spans residues lysine 76–leucine 97. Basic and acidic residues predominate over residues glycine 83–leucine 97.

This sequence belongs to the bacterial ribosomal protein bL31 family. Type A subfamily. Part of the 50S ribosomal subunit.

Binds the 23S rRNA. In Mycoplasma pneumoniae (strain ATCC 29342 / M129 / Subtype 1) (Mycoplasmoides pneumoniae), this protein is Large ribosomal subunit protein bL31.